A 75-amino-acid polypeptide reads, in one-letter code: ATP synthase subunit c (75 aa).

2 helical membrane passes run 12-32 (LASI…GIVV) and 49-69 (LTVL…IGIG).

The protein belongs to the ATPase C chain family. In terms of assembly, F-type ATPases have 2 components, F(1) - the catalytic core - and F(0) - the membrane proton channel. F(1) has five subunits: alpha(3), beta(3), gamma(1), delta(1), epsilon(1). F(0) has three main subunits: a(1), b(2) and c(10-14). The alpha and beta chains form an alternating ring which encloses part of the gamma chain. F(1) is attached to F(0) by a central stalk formed by the gamma and epsilon chains, while a peripheral stalk is formed by the delta and b chains.

It localises to the cell membrane. Functionally, f(1)F(0) ATP synthase produces ATP from ADP in the presence of a proton or sodium gradient. F-type ATPases consist of two structural domains, F(1) containing the extramembraneous catalytic core and F(0) containing the membrane proton channel, linked together by a central stalk and a peripheral stalk. During catalysis, ATP synthesis in the catalytic domain of F(1) is coupled via a rotary mechanism of the central stalk subunits to proton translocation. Its function is as follows. Key component of the F(0) channel; it plays a direct role in translocation across the membrane. A homomeric c-ring of between 10-14 subunits forms the central stalk rotor element with the F(1) delta and epsilon subunits. The protein is ATP synthase subunit c of Tropheryma whipplei (strain TW08/27) (Whipple's bacillus).